Here is an 83-residue protein sequence, read N- to C-terminus: uncharacterized protein (83 aa).

This is an uncharacterized protein from Escherichia phage Bf23 (Enterobacteria phage BF23).